A 499-amino-acid polypeptide reads, in one-letter code: Lysine--tRNA ligase (499 aa).

Mg(2+) is bound by residues glutamate 408 and glutamate 415.

Belongs to the class-II aminoacyl-tRNA synthetase family. Homodimer. Mg(2+) serves as cofactor.

It is found in the cytoplasm. It carries out the reaction tRNA(Lys) + L-lysine + ATP = L-lysyl-tRNA(Lys) + AMP + diphosphate. The polypeptide is Lysine--tRNA ligase (Thermoanaerobacter pseudethanolicus (strain ATCC 33223 / 39E) (Clostridium thermohydrosulfuricum)).